A 258-amino-acid polypeptide reads, in one-letter code: Acetylglutamate kinase (258 aa).

Substrate-binding positions include 44–45, Arg66, and Asn158; that span reads GG. ATP contacts are provided by residues 181 to 186 and 209 to 211; these read DVSGIL and IIT.

It belongs to the acetylglutamate kinase family. ArgB subfamily. Homodimer.

Its subcellular location is the cytoplasm. It catalyses the reaction N-acetyl-L-glutamate + ATP = N-acetyl-L-glutamyl 5-phosphate + ADP. Its pathway is amino-acid biosynthesis; L-arginine biosynthesis; N(2)-acetyl-L-ornithine from L-glutamate: step 2/4. Catalyzes the ATP-dependent phosphorylation of N-acetyl-L-glutamate. This chain is Acetylglutamate kinase, found in Klebsiella pneumoniae subsp. pneumoniae (strain ATCC 700721 / MGH 78578).